The following is a 66-amino-acid chain: Truncated interferon antagonist OPG039 (66 aa).

Residues 29–58 form an ANK repeat; that stretch reads HGHSALYYAIADNNMRLVCTLLNAGALKNL.

Belongs to the orthopoxvirus OPG039 family.

The chain is Truncated interferon antagonist OPG039 (OPG040) from Homo sapiens (Human).